The following is a 301-amino-acid chain: tRNA pseudouridine synthase B (301 aa).

Aspartate 38 (nucleophile) is an active-site residue.

It belongs to the pseudouridine synthase TruB family. Type 1 subfamily.

The enzyme catalyses uridine(55) in tRNA = pseudouridine(55) in tRNA. In terms of biological role, responsible for synthesis of pseudouridine from uracil-55 in the psi GC loop of transfer RNAs. This is tRNA pseudouridine synthase B from Ehrlichia canis (strain Jake).